The following is a 184-amino-acid chain: ATP synthase subunit delta (184 aa).

The protein belongs to the ATPase delta chain family. In terms of assembly, F-type ATPases have 2 components, F(1) - the catalytic core - and F(0) - the membrane proton channel. F(1) has five subunits: alpha(3), beta(3), gamma(1), delta(1), epsilon(1). F(0) has three main subunits: a(1), b(2) and c(10-14). The alpha and beta chains form an alternating ring which encloses part of the gamma chain. F(1) is attached to F(0) by a central stalk formed by the gamma and epsilon chains, while a peripheral stalk is formed by the delta and b chains.

The protein localises to the cell inner membrane. F(1)F(0) ATP synthase produces ATP from ADP in the presence of a proton or sodium gradient. F-type ATPases consist of two structural domains, F(1) containing the extramembraneous catalytic core and F(0) containing the membrane proton channel, linked together by a central stalk and a peripheral stalk. During catalysis, ATP synthesis in the catalytic domain of F(1) is coupled via a rotary mechanism of the central stalk subunits to proton translocation. In terms of biological role, this protein is part of the stalk that links CF(0) to CF(1). It either transmits conformational changes from CF(0) to CF(1) or is implicated in proton conduction. The protein is ATP synthase subunit delta of Paramagnetospirillum magneticum (strain ATCC 700264 / AMB-1) (Magnetospirillum magneticum).